A 352-amino-acid polypeptide reads, in one-letter code: 4-hydroxy-2-oxovalerate aldolase 4 (352 aa).

The Pyruvate carboxyltransferase domain maps to I9 to I261. A substrate-binding site is contributed by R17–D18. A Mn(2+)-binding site is contributed by D18. The active-site Proton acceptor is the H21. Substrate is bound by residues S171 and H200. 2 residues coordinate Mn(2+): H200 and H202. Substrate is bound at residue Y291.

It belongs to the 4-hydroxy-2-oxovalerate aldolase family.

The catalysed reaction is (S)-4-hydroxy-2-oxopentanoate = acetaldehyde + pyruvate. The sequence is that of 4-hydroxy-2-oxovalerate aldolase 4 from Rhodococcus jostii (strain RHA1).